Consider the following 243-residue polypeptide: PF03932 family protein CutC (243 aa).

This sequence belongs to the CutC family.

The protein resides in the cytoplasm. The polypeptide is PF03932 family protein CutC (Glaesserella parasuis serovar 5 (strain SH0165) (Haemophilus parasuis)).